The following is a 439-amino-acid chain: GTPase Obg (439 aa).

The 159-residue stretch at 4–162 (IEFIDVVDIY…KHIQLELKLL (159 aa)) folds into the Obg domain. In terms of domain architecture, OBG-type G spans 163-336 (ADVGLIGYPN…LKYAMWDIIK (174 aa)). Residues 169 to 176 (GYPNVGKS), 194 to 198 (FTTLV), 218 to 221 (DIPG), 288 to 291 (NKSD), and 317 to 319 (SAV) each bind GTP. Positions 176 and 196 each coordinate Mg(2+). One can recognise an OCT domain in the interval 361-439 (LVLPDRVDIK…VEGVDFIFKE (79 aa)).

It belongs to the TRAFAC class OBG-HflX-like GTPase superfamily. OBG GTPase family. In terms of assembly, monomer. The cofactor is Mg(2+).

It is found in the cytoplasm. An essential GTPase which binds GTP, GDP and possibly (p)ppGpp with moderate affinity, with high nucleotide exchange rates and a fairly low GTP hydrolysis rate. Plays a role in control of the cell cycle, stress response, ribosome biogenesis and in those bacteria that undergo differentiation, in morphogenesis control. This is GTPase Obg from Fervidobacterium nodosum (strain ATCC 35602 / DSM 5306 / Rt17-B1).